The sequence spans 336 residues: DNA-directed RNA polymerase subunit alpha (336 aa).

The alpha N-terminal domain (alpha-NTD) stretch occupies residues 1 to 233 (MSSNSFLTPR…EQFSFFADLE (233 aa)). An alpha C-terminal domain (alpha-CTD) region spans residues 247-336 (IDPILLRPVD…YIKEPGHASS (90 aa)).

The protein belongs to the RNA polymerase alpha chain family. Homodimer. The RNAP catalytic core consists of 2 alpha, 1 beta, 1 beta' and 1 omega subunit. When a sigma factor is associated with the core the holoenzyme is formed, which can initiate transcription.

It carries out the reaction RNA(n) + a ribonucleoside 5'-triphosphate = RNA(n+1) + diphosphate. Functionally, DNA-dependent RNA polymerase catalyzes the transcription of DNA into RNA using the four ribonucleoside triphosphates as substrates. The protein is DNA-directed RNA polymerase subunit alpha of Nitrosomonas europaea (strain ATCC 19718 / CIP 103999 / KCTC 2705 / NBRC 14298).